A 400-amino-acid polypeptide reads, in one-letter code: DNA polymerase IV (400 aa).

The UmuC domain occupies 8–191; sequence ILLCDANSFF…LPVRELFGIG (184 aa). 2 residues coordinate Mg(2+): aspartate 12 and aspartate 109. The active site involves glutamate 110.

This sequence belongs to the DNA polymerase type-Y family. As to quaternary structure, monomer. Mg(2+) serves as cofactor.

The protein resides in the cytoplasm. It carries out the reaction DNA(n) + a 2'-deoxyribonucleoside 5'-triphosphate = DNA(n+1) + diphosphate. Poorly processive, error-prone DNA polymerase involved in untargeted mutagenesis. Copies undamaged DNA at stalled replication forks, which arise in vivo from mismatched or misaligned primer ends. These misaligned primers can be extended by PolIV. Exhibits no 3'-5' exonuclease (proofreading) activity. May be involved in translesional synthesis, in conjunction with the beta clamp from PolIII. The chain is DNA polymerase IV from Moorella thermoacetica (strain ATCC 39073 / JCM 9320).